Reading from the N-terminus, the 465-residue chain is 3-isopropylmalate dehydratase large subunit (465 aa).

Cysteine 346, cysteine 406, and cysteine 409 together coordinate [4Fe-4S] cluster.

It belongs to the aconitase/IPM isomerase family. LeuC type 1 subfamily. As to quaternary structure, heterodimer of LeuC and LeuD. Requires [4Fe-4S] cluster as cofactor.

The enzyme catalyses (2R,3S)-3-isopropylmalate = (2S)-2-isopropylmalate. It participates in amino-acid biosynthesis; L-leucine biosynthesis; L-leucine from 3-methyl-2-oxobutanoate: step 2/4. In terms of biological role, catalyzes the isomerization between 2-isopropylmalate and 3-isopropylmalate, via the formation of 2-isopropylmaleate. The chain is 3-isopropylmalate dehydratase large subunit from Leptospira interrogans serogroup Icterohaemorrhagiae serovar copenhageni (strain Fiocruz L1-130).